The following is a 288-amino-acid chain: Acetyl-coenzyme A carboxylase carboxyl transferase subunit beta (288 aa).

Residues 32–288 (LFAKCPACKH…LELHTEVENV (257 aa)) form the CoA carboxyltransferase N-terminal domain. The Zn(2+) site is built by C36, C39, C54, and C57. Residues 36-57 (CPACKHTIYQKDLGKNKVCPNC) form a C4-type zinc finger.

This sequence belongs to the AccD/PCCB family. In terms of assembly, acetyl-CoA carboxylase is a heterohexamer composed of biotin carboxyl carrier protein (AccB), biotin carboxylase (AccC) and two subunits each of ACCase subunit alpha (AccA) and ACCase subunit beta (AccD). Zn(2+) serves as cofactor.

The protein resides in the cytoplasm. It catalyses the reaction N(6)-carboxybiotinyl-L-lysyl-[protein] + acetyl-CoA = N(6)-biotinyl-L-lysyl-[protein] + malonyl-CoA. It participates in lipid metabolism; malonyl-CoA biosynthesis; malonyl-CoA from acetyl-CoA: step 1/1. Functionally, component of the acetyl coenzyme A carboxylase (ACC) complex. Biotin carboxylase (BC) catalyzes the carboxylation of biotin on its carrier protein (BCCP) and then the CO(2) group is transferred by the transcarboxylase to acetyl-CoA to form malonyl-CoA. This chain is Acetyl-coenzyme A carboxylase carboxyl transferase subunit beta, found in Lactococcus lactis subsp. cremoris (strain SK11).